The primary structure comprises 127 residues: Serum amyloid A protein (127 aa).

The N-terminal stretch at 1–18 is a signal peptide; that stretch reads MKLLTSLFLLSLVLCVNS. Position 19 is a pyrrolidone carboxylic acid (Gln-19). The disordered stretch occupies residues 89-127; that stretch reads GGSSGRGVEDSMADQEANRWGRSGKDPNRYRPKGLDPKY. A compositionally biased stretch (basic and acidic residues) spans 104 to 127; sequence EANRWGRSGKDPNRYRPKGLDPKY.

It belongs to the SAA family. Expressed by the liver; secreted in plasma.

The protein localises to the secreted. Functionally, major acute phase reactant. Apolipoprotein of the HDL complex. In Notamacropus eugenii (Tammar wallaby), this protein is Serum amyloid A protein (SAA1).